We begin with the raw amino-acid sequence, 395 residues long: NADH-quinone oxidoreductase subunit D (395 aa).

It belongs to the complex I 49 kDa subunit family. As to quaternary structure, NDH-1 is composed of 14 different subunits. Subunits NuoB, C, D, E, F, and G constitute the peripheral sector of the complex.

It localises to the cell inner membrane. It catalyses the reaction a quinone + NADH + 5 H(+)(in) = a quinol + NAD(+) + 4 H(+)(out). Its function is as follows. NDH-1 shuttles electrons from NADH, via FMN and iron-sulfur (Fe-S) centers, to quinones in the respiratory chain. The immediate electron acceptor for the enzyme in this species is believed to be ubiquinone. Couples the redox reaction to proton translocation (for every two electrons transferred, four hydrogen ions are translocated across the cytoplasmic membrane), and thus conserves the redox energy in a proton gradient. The protein is NADH-quinone oxidoreductase subunit D of Anaplasma phagocytophilum (strain HZ).